The following is a 217-amino-acid chain: 3,4-dihydroxy-2-butanone 4-phosphate synthase (217 aa).

D-ribulose 5-phosphate is bound by residues 37 to 38 (RE), Asp-42, 150 to 154 (RRGHT), and Glu-174. Glu-38 contributes to the Mg(2+) binding site. His-153 contributes to the Mg(2+) binding site.

Belongs to the DHBP synthase family. In terms of assembly, homodimer. It depends on Mg(2+) as a cofactor. Mn(2+) is required as a cofactor.

It catalyses the reaction D-ribulose 5-phosphate = (2S)-2-hydroxy-3-oxobutyl phosphate + formate + H(+). Its pathway is cofactor biosynthesis; riboflavin biosynthesis; 2-hydroxy-3-oxobutyl phosphate from D-ribulose 5-phosphate: step 1/1. Catalyzes the conversion of D-ribulose 5-phosphate to formate and 3,4-dihydroxy-2-butanone 4-phosphate. The protein is 3,4-dihydroxy-2-butanone 4-phosphate synthase of Shewanella sp. (strain W3-18-1).